A 338-amino-acid chain; its full sequence is Fructose-1,6-bisphosphatase class 1 1 (338 aa).

Mg(2+) is bound by residues glutamate 91, aspartate 113, leucine 115, and aspartate 116. Residues 116–119 (DGSS), asparagine 208, and lysine 274 each bind substrate. Residue glutamate 280 coordinates Mg(2+).

Belongs to the FBPase class 1 family. Homotetramer. The cofactor is Mg(2+).

Its subcellular location is the cytoplasm. The catalysed reaction is beta-D-fructose 1,6-bisphosphate + H2O = beta-D-fructose 6-phosphate + phosphate. It participates in carbohydrate biosynthesis; gluconeogenesis. The chain is Fructose-1,6-bisphosphatase class 1 1 from Cupriavidus necator (strain ATCC 17699 / DSM 428 / KCTC 22496 / NCIMB 10442 / H16 / Stanier 337) (Ralstonia eutropha).